Here is a 220-residue protein sequence, read N- to C-terminus: Probable septum site-determining protein MinC (220 aa).

Belongs to the MinC family. As to quaternary structure, interacts with MinD and FtsZ.

Cell division inhibitor that blocks the formation of polar Z ring septums. Rapidly oscillates between the poles of the cell to destabilize FtsZ filaments that have formed before they mature into polar Z rings. Prevents FtsZ polymerization. In Photobacterium profundum (strain SS9), this protein is Probable septum site-determining protein MinC.